We begin with the raw amino-acid sequence, 131 residues long: Cystatin-like cysteine protease inhibitor EPIC3 (131 aa).

The signal sequence occupies residues 1-22; it reads MAFTRSIALFAGLALAASSAQG. N-linked (GlcNAc...) asparagine glycosylation occurs at N33. Residues 71 to 75 carry the Secondary area of contact motif; it reads QTVAG.

Belongs to the cystatin family.

Its subcellular location is the secreted. Secreted effector that interacts with and inhibits host apoplastic pathogenesis-related papain-like cysteine proteases. Inhibition of host proteases by a pathogen extracellular protease inhibitor forms a specific type of defense-counterdefense mechanism between plants and microbial pathogens. This chain is Cystatin-like cysteine protease inhibitor EPIC3, found in Phytophthora infestans (strain T30-4) (Potato late blight agent).